The chain runs to 395 residues: Putative nickel insertion protein (395 aa).

It belongs to the LarC family.

The protein is Putative nickel insertion protein of Roseiflexus castenholzii (strain DSM 13941 / HLO8).